Here is a 161-residue protein sequence, read N- to C-terminus: ATP synthase subunit b (161 aa).

Residues 10-29 form a helical membrane-spanning segment; it reads SVIQLMSFFLLLYILKKFLY.

This sequence belongs to the ATPase B chain family. F-type ATPases have 2 components, F(1) - the catalytic core - and F(0) - the membrane proton channel. F(1) has five subunits: alpha(3), beta(3), gamma(1), delta(1), epsilon(1). F(0) has three main subunits: a(1), b(2) and c(10-14). The alpha and beta chains form an alternating ring which encloses part of the gamma chain. F(1) is attached to F(0) by a central stalk formed by the gamma and epsilon chains, while a peripheral stalk is formed by the delta and b chains.

It localises to the cell inner membrane. Functionally, f(1)F(0) ATP synthase produces ATP from ADP in the presence of a proton or sodium gradient. F-type ATPases consist of two structural domains, F(1) containing the extramembraneous catalytic core and F(0) containing the membrane proton channel, linked together by a central stalk and a peripheral stalk. During catalysis, ATP synthesis in the catalytic domain of F(1) is coupled via a rotary mechanism of the central stalk subunits to proton translocation. Component of the F(0) channel, it forms part of the peripheral stalk, linking F(1) to F(0). This chain is ATP synthase subunit b, found in Thermosipho melanesiensis (strain DSM 12029 / CIP 104789 / BI429).